Here is a 98-residue protein sequence, read N- to C-terminus: uncharacterized protein (98 aa).

2 helical membrane passes run 14–34 (FLVI…PVTA) and 41–61 (MTGA…ASII).

It localises to the cell membrane. This is an uncharacterized protein from Haemophilus influenzae (strain ATCC 51907 / DSM 11121 / KW20 / Rd).